Here is a 236-residue protein sequence, read N- to C-terminus: Orotidine 5'-phosphate decarboxylase (236 aa).

Residues Asp-11, Lys-33, Asp-60–Thr-69, Thr-119, Arg-181, Gln-190, Gly-210, and Arg-211 contribute to the substrate site. The Proton donor role is filled by Lys-62.

Belongs to the OMP decarboxylase family. Type 1 subfamily. Homodimer.

It carries out the reaction orotidine 5'-phosphate + H(+) = UMP + CO2. It participates in pyrimidine metabolism; UMP biosynthesis via de novo pathway; UMP from orotate: step 2/2. Catalyzes the decarboxylation of orotidine 5'-monophosphate (OMP) to uridine 5'-monophosphate (UMP). The polypeptide is Orotidine 5'-phosphate decarboxylase (Cutibacterium acnes (strain DSM 16379 / KPA171202) (Propionibacterium acnes)).